Reading from the N-terminus, the 766-residue chain is MDRDLLRQSLGCHGPALLSLLRSEQQDNPHFRSLLGTAAEPARGAAPPPGAGRKEKRVDNIEIQKFISKKADLLFALSWKSDASPPSEVHDDNDNLYAVMPPLEQFMEMPSMDRRELFFRDIERGDIVIGRISSIREFGFFMVLICLGSGIVRDISHLEITALCPLRDVPSHSNHGDPLSYYQTGDIIRAGIKDIDRYHEKLAVSLYSSSLPPHMAGIKLGVITSEELPMYYRRSVELNSNSLESYENIMQSSLGFVNPGVVEFLLEKLGIDESHPPSLMRGLQSKNFSEDDFASALRKKQSASWALKCVKIGVDYFKVGRHVDAMNEYNKALEIDKQNVEALVARGALYATKGSLNKAIEDFELALENCPTHRNARKYLCQTLVERGGQLEEEEKFLNAESYYKKALTLDETFKDAEDALQKLHKYMQKSLELREKQAEKEEKQKTKKIETRAEKLRKLLKEEKRLKKKRRKSSSSSSVSSADESVSSSSSSSSSSHKRHKKSKRNRSESSRSSKRHWSRPSSGHTDQSRKDDCYPVPTNTSASFLNQKQEVEKLLEKQDRLQCPNAQVKEKERGLLTSSGEVPDDLGGRSDFYNSYKTQAGSSKTEKPYKSERHFSRRNSSDSFSRNSEDKMKASSYRRFEKDTEGRKDHSRRWEPSSVKYSTSPASSDYSWKSLEKQKKYTYSGSRDVSKHEQRYQLNTNQGERVYEKEDSCGEGNRNEAPEEMLNSKEQPDSRVKKNLPQNLLNIFNQIAEFEKEKGNKPKK.

The disordered stretch occupies residues 35 to 55 (LGTAAEPARGAAPPPGAGRKE). In terms of domain architecture, S1 motif spans 125 to 207 (GDIVIGRISS…YHEKLAVSLY (83 aa)). TPR repeat units lie at residues 209–242 (SSLP…NSNS), 306–339 (ALKC…DKQN), 341–373 (EALV…CPTH), and 381–414 (CQTL…DETF). The interval 463-743 (EEKRLKKKRR…PDSRVKKNLP (281 aa)) is disordered. The span at 475–496 (SSSSSVSSADESVSSSSSSSSS) shows a compositional bias: low complexity. Basic residues predominate over residues 497 to 506 (SHKRHKKSKR). Residues 539-550 (PTNTSASFLNQK) show a composition bias toward polar residues. Positions 551 to 562 (QEVEKLLEKQDR) are enriched in basic and acidic residues. Residues 594–605 (FYNSYKTQAGSS) show a composition bias toward polar residues. 2 stretches are compositionally biased toward basic and acidic residues: residues 606–616 (KTEKPYKSERH) and 629–657 (NSED…RRWE). The segment covering 661–673 (VKYSTSPASSDYS) has biased composition (polar residues). Ser-666 carries the post-translational modification Phosphoserine. The segment covering 707–738 (RVYEKEDSCGEGNRNEAPEEMLNSKEQPDSRV) has biased composition (basic and acidic residues).

The protein belongs to the TTC14 family.

In Mus musculus (Mouse), this protein is Tetratricopeptide repeat protein 14.